Consider the following 451-residue polypeptide: Protein naked cuticle homolog 2 (451 aa).

Residues 1–108 (MGKLQSKHAA…PRGPGGQRLN (108 aa)) form a disordered region. Gly2 carries N-myristoyl glycine lipidation. The interval 2–173 (GKLQSKHAAA…GSSKTLRVKL (172 aa)) is targeting to the basolateral cell membrane. 2 stretches are compositionally biased toward basic and acidic residues: residues 34-63 (KGAEEAERRARDKQELPNGDPKEGPFREDQ) and 89-99 (DGERAANREGP). An interaction with DVL1, DVL2 and DVL3 region spans residues 113–178 (QCDVSVEEDD…LRVKLTVSPE (66 aa)). The region spanning 119–154 (EEDDRQEWTFTLYDFDNCGKVTREDMSSLMHTIYEV) is the EF-hand domain. Residues Asp132, Asp134, Lys138, and Asp143 each coordinate Ca(2+). 2 disordered regions span residues 162–237 (SSGS…PYCV) and 256–408 (YTSR…TVEH). Residues 180–215 (SSKRKEGPPAGQDREPTRCRMEGELAEEPRVADRRL) are compositionally biased toward basic and acidic residues. The tract at residues 300-385 (QVLVEHVVPA…PPPPYGHKRY (86 aa)) is interaction with TGFA. Low complexity predominate over residues 332 to 351 (KSPKGSGKPPGVPASSKSGK).

It belongs to the NKD family. In terms of assembly, interacts with DVL1, DVL2, DVL3 and PPP2R3A. Interacts with RNF25 and TGFA (via cytoplasmic domain). In terms of processing, ubiquitinated, leading to rapid proteasomal degradation. Interaction with TGFA interferes with RNF25 binding and protects against ubiquitination mediated by RNF25. Expressed in kidney, lung, pancreas and spleen.

The protein resides in the cell membrane. The protein localises to the cytoplasm. It localises to the cytoplasmic vesicle. Functionally, cell autonomous antagonist of the canonical Wnt signaling pathway. May activate a second Wnt signaling pathway that controls planar cell polarity. Required for processing of TGFA and for targeting of TGFA to the basolateral membrane of polarized epithelial cells. The polypeptide is Protein naked cuticle homolog 2 (NKD2) (Homo sapiens (Human)).